A 107-amino-acid polypeptide reads, in one-letter code: Nucleoid-associated protein Lferr_1592 (107 aa).

It belongs to the YbaB/EbfC family. As to quaternary structure, homodimer.

It is found in the cytoplasm. Its subcellular location is the nucleoid. Functionally, binds to DNA and alters its conformation. May be involved in regulation of gene expression, nucleoid organization and DNA protection. This Acidithiobacillus ferrooxidans (strain ATCC 53993 / BNL-5-31) (Leptospirillum ferrooxidans (ATCC 53993)) protein is Nucleoid-associated protein Lferr_1592.